A 189-amino-acid chain; its full sequence is Elongation factor P (189 aa).

Lys-34 is subject to N6-(3,6-diaminohexanoyl)-5-hydroxylysine.

It belongs to the elongation factor P family. May be beta-lysylated on the epsilon-amino group of Lys-34 by the combined action of EpmA and EpmB, and then hydroxylated on the C5 position of the same residue by EpmC (if this protein is present). Lysylation is critical for the stimulatory effect of EF-P on peptide-bond formation. The lysylation moiety may extend toward the peptidyltransferase center and stabilize the terminal 3-CCA end of the tRNA. Hydroxylation of the C5 position on Lys-34 may allow additional potential stabilizing hydrogen-bond interactions with the P-tRNA.

It is found in the cytoplasm. Its pathway is protein biosynthesis; polypeptide chain elongation. Involved in peptide bond synthesis. Alleviates ribosome stalling that occurs when 3 or more consecutive Pro residues or the sequence PPG is present in a protein, possibly by augmenting the peptidyl transferase activity of the ribosome. Modification of Lys-34 is required for alleviation. The chain is Elongation factor P from Idiomarina loihiensis (strain ATCC BAA-735 / DSM 15497 / L2-TR).